The primary structure comprises 314 residues: MKRAPTKQPAKPAARGGERAQGRVIAAHGRHYIVAPADGGPMLQCFPRGKKSEVAVGDRVAYERTSADQGVIVEIGERRNLLYRSDQFKSKLFAANLDQLLIVLATEPYFSEDLLGRALIAAEANELKPIVVLNKIDVEAALPVARERLAPYRALGYDVLELSVKGAPDDARTQLAPRLAGHSTILLGQSGMGKSTLVNLLVPDAEAATREISAALNSGRHTTTFTRLYPLQDGGALIDSPGFQEFGLYHLTEGRLERAFPEFRPLLAHCRFYNCHHLHEPGCAILEALADGRIAPTRHALYAQLVHEASQIVR.

Positions 1-21 (MKRAPTKQPAKPAARGGERAQ) are disordered. Residues 85–246 (SDQFKSKLFA…LIDSPGFQEF (162 aa)) form the CP-type G domain. Residues 134–137 (NKID) and 188–196 (GQSGMGKST) contribute to the GTP site. Cysteine 270, cysteine 275, histidine 277, and cysteine 283 together coordinate Zn(2+).

The protein belongs to the TRAFAC class YlqF/YawG GTPase family. RsgA subfamily. As to quaternary structure, monomer. Associates with 30S ribosomal subunit, binds 16S rRNA. It depends on Zn(2+) as a cofactor.

The protein resides in the cytoplasm. Functionally, one of several proteins that assist in the late maturation steps of the functional core of the 30S ribosomal subunit. Helps release RbfA from mature subunits. May play a role in the assembly of ribosomal proteins into the subunit. Circularly permuted GTPase that catalyzes slow GTP hydrolysis, GTPase activity is stimulated by the 30S ribosomal subunit. The protein is Small ribosomal subunit biogenesis GTPase RsgA of Burkholderia pseudomallei (strain 1710b).